Reading from the N-terminus, the 271-residue chain is MERYPRQRLDDGRWQCVARPQYRYSCAISCLVSIFNHLFNRDMTLDECIAILFPDLKEDPRHYDFGPQASNSAVQSWFKTLCMHYGLSGTSCTIYKEQGRTRTACSKQEALKNIISALNTPRCALLYHCLNHYCIIVGYIISPSTPNRPSNHCVFSGDDGCTLKLLCADGTEAEDVDDSNIWLIVADCGKGTAPLRSLTWEFVHKDISTRPPYAYNARCPERGLLRKTESKGYIPVEIDSVLVNSTGVSTCVRSGGVIKGSSHCIIGFVSD.

It belongs to the BIVM family.

The polypeptide is Basic immunoglobulin-like variable motif-containing protein (BIVM) (Giardia intestinalis (strain ATCC 50803 / WB clone C6) (Giardia lamblia)).